The chain runs to 337 residues: Lipoate-protein ligase A (337 aa).

A BPL/LPL catalytic domain is found at 29 to 216 (DQNQTILFLW…AFFNYYQTTV (188 aa)). ATP contacts are provided by residues arginine 71, 76–79 (GAVF), and lysine 134. Lysine 134 contributes to the (R)-lipoate binding site.

Belongs to the LplA family. In terms of assembly, monomer.

It is found in the cytoplasm. It catalyses the reaction L-lysyl-[lipoyl-carrier protein] + (R)-lipoate + ATP = N(6)-[(R)-lipoyl]-L-lysyl-[lipoyl-carrier protein] + AMP + diphosphate + H(+). The protein operates within protein modification; protein lipoylation via exogenous pathway; protein N(6)-(lipoyl)lysine from lipoate: step 1/2. It functions in the pathway protein modification; protein lipoylation via exogenous pathway; protein N(6)-(lipoyl)lysine from lipoate: step 2/2. In terms of biological role, catalyzes both the ATP-dependent activation of exogenously supplied lipoate to lipoyl-AMP and the transfer of the activated lipoyl onto the lipoyl domains of lipoate-dependent enzymes. This chain is Lipoate-protein ligase A, found in Blochmanniella floridana.